Reading from the N-terminus, the 428-residue chain is Beta-1,3-galactosyl-O-glycosyl-glycoprotein beta-1,6-N-acetylglucosaminyltransferase (428 aa).

Topologically, residues 1 to 9 (MLRNLFRRR) are cytoplasmic. The tract at residues 5-9 (LFRRR) is mediates interaction with GOLPH3 and is necessary and sufficient for localization to the Golgi. A helical; Signal-anchor for type II membrane protein membrane pass occupies residues 10–32 (LFSCPTKYYFMLLVLSLITFSVL). Positions 33–121 (RIHQKPEFFS…EPLTKEEVGF (89 aa)) are stem region. Residues 33–428 (RIHQKPEFFS…RHKALENLEH (396 aa)) lie on the Lumenal side of the membrane. 2 N-linked (GlcNAc...) asparagine glycosylation sites follow: Asn-58 and Asn-95. Disulfide bonds link Cys-59/Cys-413, Cys-100/Cys-172, Cys-151/Cys-199, and Cys-372/Cys-381. Residues 122-428 (PIAYSIVVHH…RHKALENLEH (307 aa)) form a catalytic region. UDP-N-acetyl-alpha-D-glucosamine-binding positions include 128 to 130 (VVH), 155 to 157 (DRK), and Tyr-187. The a glycoprotein site is built by Glu-243, Asn-250, Lys-251, Arg-254, Glu-320, Lys-341, and Tyr-358. Glu-320 functions as the Nucleophile in the catalytic mechanism. Residues Arg-378 and Lys-401 each coordinate UDP-N-acetyl-alpha-D-glucosamine.

Belongs to the glycosyltransferase 14 family. As to quaternary structure, interacts with GOLPH3; may control GCNT1 retention in the Golgi. Post-translationally, N-glycosylated. As to expression, expressed in kidney, liver, stomach, spleen, lung and brain.

Its subcellular location is the golgi apparatus membrane. It catalyses the reaction a 3-O-[beta-D-galactosyl-(1-&gt;3)-N-acetyl-alpha-D-galactosaminyl]-L-seryl-[protein] + UDP-N-acetyl-alpha-D-glucosamine = 3-O-{beta-D-galactosyl-(1-&gt;3)-[N-acetyl-beta-D-glucosaminyl-(1-&gt;6)]-N-acetyl-alpha-D-galactosaminyl}-L-seryl-[protein] + UDP + H(+). The enzyme catalyses a 3-O-[beta-D-galactosyl-(1-&gt;3)-N-acetyl-alpha-D-galactosaminyl]-L-threonyl-[protein] + UDP-N-acetyl-alpha-D-glucosamine = a 3-O-{beta-D-galactosyl-(1-&gt;3)-[N-acetyl-beta-D-glucosaminyl-(1-&gt;6)]-N-acetyl-alpha-D-galactosaminyl}-L-threonyl-[protein] + UDP + H(+). The catalysed reaction is a globoside GalGb4Cer + UDP-N-acetyl-alpha-D-glucosamine = a globoside GlcNAc-(beta1-&gt;6)-GalGb4Cer + UDP + H(+). It carries out the reaction a ganglioside GA1 + UDP-N-acetyl-alpha-D-glucosamine = a ganglioside beta-D-GlcNAc-(1-&gt;6)-GA1 + UDP + H(+). It functions in the pathway protein modification; protein glycosylation. It participates in glycolipid biosynthesis. Its activity is regulated as follows. Inactivated by thiol-reactive agents. Inhibited by free UDP. Its function is as follows. Glycosyltransferase that catalyzes the transfer of an N-acetylglucosamine (GlcNAc) moiety in beta1-6 linkage from UDP-GlcNAc onto mucin-type core 1 O-glycan to form the branched mucin-type core 2 O-glycan. The catalysis is metal ion-independent and occurs with inversion of the anomeric configuration of sugar donor. Selectively involved in synthesis of mucin-type core 2 O-glycans that serve as scaffolds for the display of selectin ligand sialyl Lewis X epitope by myeloid cells, with an impact on homeostasis and recruitment to inflammatory sites. Can also act on glycolipid substrates. Transfers GlcNAc moiety to GalGb4Cer globosides in a reaction step to the synthesis of stage-specific embryonic antigen 1 (SSEA-1) determinant. Can use Galbeta1-3GalNAcalpha1-R and Galbeta1-3GalNAcbeta1-R oligosaccharide derivatives as acceptor substrates. The protein is Beta-1,3-galactosyl-O-glycosyl-glycoprotein beta-1,6-N-acetylglucosaminyltransferase (Gcnt1) of Mus musculus (Mouse).